Reading from the N-terminus, the 371-residue chain is MQFVAVLAALGALVAPAAAYPHAPMNETLVDVQLTAVGNTMVKATITNKGDSVLNMLQFNTIMDENPTRKVMVFQDGVEVPFTGMMPRYLMSDLTEEFFTTLPPQASVEHTFDIAATHDLSAGGKYVISASGAVPTAEEHSTTITSTALYESNELHMEVDGVQAAAVEQAMNFTPEMQSIHARALEKRTKIVSGSCNQNTLRATMNALGNSARLAQAASRAASQNPRKFQEYFRTNDANAKQRVIARLNSVARESSSANAGVTTYYCSDTMGGCKPRVLAYTLPSRNLVVNCPIYYNLPPLTKQCHAQDQATTTLHEFTHNPAVASPHCQDYAYGYQQCISLPAAKAVQNADNYALFANGMLSNLFVFTLN.

Positions 1–19 (MQFVAVLAALGALVAPAAA) are cleaved as a signal peptide. Residues 20–188 (YPHAPMNETL…SIHARALEKR (169 aa)) constitute a propeptide that is removed on maturation. Cystine bridges form between Cys196/Cys267 and Cys274/Cys292. His316 contributes to the Zn(2+) binding site. Glu317 is a catalytic residue. The Zn(2+) site is built by His320 and Asp331.

This sequence belongs to the peptidase M35 family. Zn(2+) is required as a cofactor.

The protein resides in the secreted. The enzyme catalyses Preferential cleavage of bonds with hydrophobic residues in P1'. Also 3-Asn-|-Gln-4 and 8-Gly-|-Ser-9 bonds in insulin B chain.. Its function is as follows. Secreted metalloproteinase that allows assimilation of proteinaceous substrates. Shows high activities on basic nuclear substrates such as histone and protamine. May be involved in virulence. The protein is Neutral protease 2 homolog MGYG_03465 of Arthroderma gypseum (strain ATCC MYA-4604 / CBS 118893) (Microsporum gypseum).